The sequence spans 412 residues: Orcinol synthase (412 aa).

Active-site residues include Cys164, His322, and Asn355.

This sequence belongs to the thiolase-like superfamily. Chalcone/stilbene synthases family. As to quaternary structure, homodimer. In terms of tissue distribution, mainly expressed in young leaves, and barely in mature leaves and twigs.

It carries out the reaction 3 malonyl-CoA + acetyl-CoA + 3 H(+) = orcinol + 4 CO2 + 4 CoA. The enzyme catalyses 3 malonyl-CoA + acetyl-CoA + 2 H(+) = orsellinate + 3 CO2 + 4 CoA. The catalysed reaction is 3 malonyl-CoA + acetyl-CoA + 3 H(+) = tetraacetate lactone + 3 CO2 + 4 CoA. It catalyses the reaction 2 malonyl-CoA + acetyl-CoA + 2 H(+) = triacetate lactone + 2 CO2 + 3 CoA. It carries out the reaction 3 malonyl-CoA + acetyl-CoA + 3 H(+) = 2-acetylphloroglucinol + 3 CO2 + 4 CoA. The protein operates within secondary metabolite biosynthesis; terpenoid biosynthesis. Involved in the biosynthesis of acetate-derived aromatic tetraketides natural products, precursors of daurichromenic acid, an anti-human immunodeficiency viruses (HIV) meroterpenoid consisting of sesquiterpene and orsellinic acid (OSA) moieties. Accepts acetyl-CoA as starter substrate and produces orcinol as the major reaction product, along with four minor products including OSA, tetraacetate lactone, triacetate lactone and 2-acetylphloroglucinol. This Rhododendron dauricum (Azalea daurica) protein is Orcinol synthase.